Consider the following 258-residue polypeptide: Aspartate/glutamate leucyltransferase (258 aa).

The protein belongs to the R-transferase family. Bpt subfamily.

The protein resides in the cytoplasm. It catalyses the reaction N-terminal L-glutamyl-[protein] + L-leucyl-tRNA(Leu) = N-terminal L-leucyl-L-glutamyl-[protein] + tRNA(Leu) + H(+). The catalysed reaction is N-terminal L-aspartyl-[protein] + L-leucyl-tRNA(Leu) = N-terminal L-leucyl-L-aspartyl-[protein] + tRNA(Leu) + H(+). In terms of biological role, functions in the N-end rule pathway of protein degradation where it conjugates Leu from its aminoacyl-tRNA to the N-termini of proteins containing an N-terminal aspartate or glutamate. In Rhodopseudomonas palustris (strain TIE-1), this protein is Aspartate/glutamate leucyltransferase.